Here is a 399-residue protein sequence, read N- to C-terminus: S-adenosylmethionine synthase (399 aa).

Residue His-16 coordinates ATP. Asp-18 is a binding site for Mg(2+). Residue Glu-44 coordinates K(+). L-methionine contacts are provided by Glu-57 and Gln-100. The flexible loop stretch occupies residues 100-110 (QSSDIAQGVNE). Residues 177–179 (DAK), 244–245 (RF), Asp-253, 259–260 (RK), Ala-276, and Lys-280 contribute to the ATP site. Asp-253 serves as a coordination point for L-methionine. Residue Lys-284 participates in L-methionine binding.

This sequence belongs to the AdoMet synthase family. In terms of assembly, homotetramer; dimer of dimers. It depends on Mg(2+) as a cofactor. K(+) serves as cofactor.

It localises to the cytoplasm. The enzyme catalyses L-methionine + ATP + H2O = S-adenosyl-L-methionine + phosphate + diphosphate. The protein operates within amino-acid biosynthesis; S-adenosyl-L-methionine biosynthesis; S-adenosyl-L-methionine from L-methionine: step 1/1. In terms of biological role, catalyzes the formation of S-adenosylmethionine (AdoMet) from methionine and ATP. The overall synthetic reaction is composed of two sequential steps, AdoMet formation and the subsequent tripolyphosphate hydrolysis which occurs prior to release of AdoMet from the enzyme. The polypeptide is S-adenosylmethionine synthase (Lactococcus lactis subsp. cremoris (strain MG1363)).